The primary structure comprises 336 residues: Sodium/bile acid cotransporter 7 (336 aa).

Topologically, residues Met1–Glu10 are cytoplasmic. Residues Trp11–Val31 form a helical membrane-spanning segment. The Extracellular segment spans residues Lys32–His37. A helical membrane pass occupies residues Pro38–Leu58. Topologically, residues Lys59–Lys71 are cytoplasmic. Residues Leu72 to Leu92 traverse the membrane as a helical segment. Over Lys93 to Pro116 the chain is Extracellular. The helical transmembrane segment at Pro117–Phe137 threads the bilayer. A topological domain (cytoplasmic) is located at residue Asn138. A helical transmembrane segment spans residues Ser139–Gly159. The Extracellular portion of the chain corresponds to Ser160–Ser163. The helical transmembrane segment at Val164 to Gly184 threads the bilayer. Residues Gln185–Pro201 lie on the Cytoplasmic side of the membrane. Residues Phe202–Phe222 traverse the membrane as a helical segment. Residues Asn223–Ser233 lie on the Extracellular side of the membrane. Residues Leu234–Phe254 traverse the membrane as a helical segment. The Cytoplasmic portion of the chain corresponds to Leu255–Ala270. A helical membrane pass occupies residues Ile271–Phe291. Over Glu292 to Ser298 the chain is Extracellular. The helical transmembrane segment at Leu299 to Leu319 threads the bilayer. The Cytoplasmic segment spans residues Pro320–Ile336.

It belongs to the bile acid:sodium symporter (BASS) (TC 2.A.28) family.

The protein resides in the cell membrane. It is found in the endoplasmic reticulum membrane. Its subcellular location is the golgi apparatus membrane. Its function is as follows. Involved in teeth and skeletal development. Has an essential role in the biosynthesis and trafficking of glycosaminoglycans and glycoproteins to produce a proper functioning extracellular matrix. Required for extracellular matrix mineralization. Also involved in the regulation of cellular calcium homeostasis. Does not show transport activity towards bile acids or steroid sulfates. The sequence is that of Sodium/bile acid cotransporter 7 (slc10a7) from Danio rerio (Zebrafish).